The primary structure comprises 63 residues: Mu-like prophage FluMu protein gp38 (63 aa).

It to phage Mu protein gp38.

In Haemophilus influenzae (strain ATCC 51907 / DSM 11121 / KW20 / Rd), this protein is Mu-like prophage FluMu protein gp38.